The following is a 593-amino-acid chain: DNA mismatch repair protein MutL (593 aa).

This sequence belongs to the DNA mismatch repair MutL/HexB family.

This protein is involved in the repair of mismatches in DNA. It is required for dam-dependent methyl-directed DNA mismatch repair. May act as a 'molecular matchmaker', a protein that promotes the formation of a stable complex between two or more DNA-binding proteins in an ATP-dependent manner without itself being part of a final effector complex. The polypeptide is DNA mismatch repair protein MutL (Leptospira interrogans serogroup Icterohaemorrhagiae serovar copenhageni (strain Fiocruz L1-130)).